Reading from the N-terminus, the 103-residue chain is Cell division protein FtsB (103 aa).

Residues 1–3 are Cytoplasmic-facing; sequence MGK. The helical transmembrane segment at 4–21 threads the bilayer; sequence LTLLLLAILVWLQYSLWF. The Periplasmic portion of the chain corresponds to 22-103; sequence GKNGIHDYTR…RAQSAGQNNR (82 aa). Residues 31-71 are a coiled coil; that stretch reads RVNDDVAAQQATNAKLKARNDQLFAEIDDLNGGQEALEERA.

Belongs to the FtsB family. As to quaternary structure, part of a complex composed of FtsB, FtsL and FtsQ.

It is found in the cell inner membrane. Functionally, essential cell division protein. May link together the upstream cell division proteins, which are predominantly cytoplasmic, with the downstream cell division proteins, which are predominantly periplasmic. This is Cell division protein FtsB from Escherichia coli O157:H7.